The following is a 107-amino-acid chain: DNA polymerase delta subunit 4 (107 aa).

Residues 1 to 16 (MGRKRLITDSYPVVKR) carry the PCNA-interaction protein motif (PIP box) motif. Positions 1–35 (MGRKRLITDSYPVVKRREGSAGHSKGELAPDLGEE) are disordered. The span at 15–28 (KRREGSAGHSKGEL) shows a compositional bias: basic and acidic residues.

This sequence belongs to the DNA polymerase delta subunit 4 family. In terms of assembly, component of the tetrameric DNA polymerase delta complex (Pol-delta4), which consists of POLD1/p125, POLD2/p50, POLD3/p66/p68 and POLD4/p12, with POLD1 bearing DNA polymerase and 3' to 5' proofreading exonuclease activities. Within this complex, directly interacts with POLD1 and POLD2. Directly interacts with PCNA, as do POLD1 and POLD3; this interaction stimulates Pol-delta4 polymerase activity. As POLD1 and POLD2, directly interacts with WRNIP1; this interaction stimulates DNA polymerase delta-mediated DNA synthesis, independently of the presence of PCNA, possibly by increasing initiation frequency. Upon genotoxic stress induced by DNA damaging agents or by replication stress, POLD4 is proteolytically degraded and Pol-delta4 is converted into a trimeric form of the complex (Pol-delta3) that has an increased proofreading activity. The DNA polymerase delta complex interacts with POLDIP2; this interaction is probably mediated through direct binding to POLD2. In terms of processing, ubiquitinated; undergoes 'Lys-48'-linked ubiquitination in response to UV irradiation, leading to proteasomal degradation. This modification is partly mediated by RNF8 and by the DCX(DTL) E3 ubiquitin ligase complex (also called CRL4(CDT2)). Efficient degradation requires the presence of PCNA and is required for the inhibition of fork progression after DNA damage.

Its subcellular location is the nucleus. Functionally, as a component of the tetrameric DNA polymerase delta 4 complex (Pol-delta4), plays a role in high fidelity genome replication and repair. Within this complex, increases the rate of DNA synthesis and decreases fidelity by regulating POLD1 polymerase and proofreading 3' to 5' exonuclease activity. Pol-delta4 participates in Okazaki fragment processing, through both the short flap pathway, as well as a nick translation system. Under conditions of DNA replication stress, required for the repair of broken replication forks through break-induced replication (BIR), a mechanism that may induce segmental genomic duplications of up to 200 kb. Involved in Pol-delta4 translesion synthesis (TLS) of templates carrying O6-methylguanine or abasic sites. Its degradation in response to DNA damage is required for the inhibition of fork progression and cell survival. This Bos taurus (Bovine) protein is DNA polymerase delta subunit 4 (POLD4).